We begin with the raw amino-acid sequence, 424 residues long: Glutamyl-tRNA reductase (424 aa).

Substrate contacts are provided by residues 49-52 (TCNR), serine 108, 113-115 (EPQ), and glutamine 119. The active-site Nucleophile is the cysteine 50. 188–193 (GAGETI) serves as a coordination point for NADP(+).

The protein belongs to the glutamyl-tRNA reductase family. Homodimer.

The enzyme catalyses (S)-4-amino-5-oxopentanoate + tRNA(Glu) + NADP(+) = L-glutamyl-tRNA(Glu) + NADPH + H(+). The protein operates within porphyrin-containing compound metabolism; protoporphyrin-IX biosynthesis; 5-aminolevulinate from L-glutamyl-tRNA(Glu): step 1/2. Catalyzes the NADPH-dependent reduction of glutamyl-tRNA(Glu) to glutamate 1-semialdehyde (GSA). The polypeptide is Glutamyl-tRNA reductase (Hahella chejuensis (strain KCTC 2396)).